A 185-amino-acid polypeptide reads, in one-letter code: MKTAQELRVGNVFMLGKDPMVVLKTEFTKSGRNSSVVKMKYKNLLTESPGEAVYKADDKFDIVVLDKKEVNYSYFASPMYVFMDAEFNQYEVEEETMSDALSFLEDGMPCEVVFYNDKPISVELPNTVVREIIYTEPAIKGDTTGKVLKPAKIPTGFELAVPLFCEIGDKIEIDTRTREYRSRVK.

Belongs to the elongation factor P family.

The protein localises to the cytoplasm. The protein operates within protein biosynthesis; polypeptide chain elongation. Its function is as follows. Involved in peptide bond synthesis. Stimulates efficient translation and peptide-bond synthesis on native or reconstituted 70S ribosomes in vitro. Probably functions indirectly by altering the affinity of the ribosome for aminoacyl-tRNA, thus increasing their reactivity as acceptors for peptidyl transferase. The polypeptide is Elongation factor P (Nitrosomonas europaea (strain ATCC 19718 / CIP 103999 / KCTC 2705 / NBRC 14298)).